The sequence spans 100 residues: uncharacterized protein (100 aa).

It is found in the mitochondrion. This is an uncharacterized protein from Arabidopsis thaliana (Mouse-ear cress).